A 313-amino-acid chain; its full sequence is Methionyl-tRNA formyltransferase (313 aa).

(6S)-5,6,7,8-tetrahydrofolate is bound at residue 113-116; sequence SLLP.

This sequence belongs to the Fmt family.

The enzyme catalyses L-methionyl-tRNA(fMet) + (6R)-10-formyltetrahydrofolate = N-formyl-L-methionyl-tRNA(fMet) + (6S)-5,6,7,8-tetrahydrofolate + H(+). Attaches a formyl group to the free amino group of methionyl-tRNA(fMet). The formyl group appears to play a dual role in the initiator identity of N-formylmethionyl-tRNA by promoting its recognition by IF2 and preventing the misappropriation of this tRNA by the elongation apparatus. This is Methionyl-tRNA formyltransferase from Francisella tularensis subsp. novicida (strain U112).